The primary structure comprises 41 residues: Putative toxic protein TimP (41 aa).

A transmembrane helix spans residues Met-1–Leu-17.

Belongs to the TimP toxin family.

It is found in the cell inner membrane. Functionally, putative toxic component of a potential type I toxin-antitoxin (TA) system. Neutralized by sRNA antitoxin TimR which binds to the 5' UTR of timP mRNA and inhibits translation. The antitoxin gene is encoded immediately upstream and transcribed divergently from the toxin gene; antitoxin RNA is less stable than timP mRNA. In Escherichia coli (strain K12), this protein is Putative toxic protein TimP.